The sequence spans 124 residues: uncharacterized protein (124 aa).

The GIY-YIG domain maps to 42–118 (DKGGIFMFYN…INTQHSKYNI (77 aa)).

This is an uncharacterized protein from Bacillus subtilis (strain 168).